The chain runs to 146 residues: Vascular endothelial growth factor isoform GtVF (146 aa).

Positions 1–24 are cleaved as a signal peptide; it reads MAAYLLAVAILFCIQGWPSGTVQG. Gln25 is subject to Pyrrolidone carboxylic acid. Intrachain disulfides connect Cys38/Cys80, Cys69/Cys115, and Cys73/Cys117. Positions 116–146 are disordered; the sequence is ECRPRSRSGVDSGKRKRNPEEGEPRAKFPFV. Over residues 133-146 the composition is skewed to basic and acidic residues; the sequence is NPEEGEPRAKFPFV.

This sequence belongs to the PDGF/VEGF growth factor family. Snake venom VEGF subfamily. In terms of assembly, homodimer; disulfide-linked. In terms of tissue distribution, expressed by the venom gland.

It is found in the secreted. Snake venom VEGFs that may contribute to venom dispersion and prey subjugation by inducing vascular permeability and hypotension. This protein induces an increase in capillary permeability after intradermal injection, in a VEGFR-2 (KDR) dependent manner. In addition, it provokes a drastic hypotensive effect after intravenous injection. The hypotension is mediated by nitric oxide (NO), which is produced by VEGF-activated endothelium NO synthase. Also induces angiogenesis in vitro. Unlike other crotalid VEGFs, this protein probably interacts with VEGF receptor-2 (KDR). This is Vascular endothelial growth factor isoform GtVF from Gloydius tsushimaensis (Tsushima Island pitviper).